The primary structure comprises 360 residues: uncharacterized protein (360 aa).

The ABC transporter domain maps to 4 to 235 (LSLQHIQKIY…PANMFVAGFI (232 aa)). An ATP-binding site is contributed by 37–44 (GPSGCGKS).

The protein belongs to the ABC transporter superfamily.

This is an uncharacterized protein from Escherichia coli O6:K15:H31 (strain 536 / UPEC).